A 617-amino-acid chain; its full sequence is Probable Xaa-Pro aminopeptidase P (617 aa).

Positions 414, 425, 523, and 537 each coordinate Mn(2+).

It belongs to the peptidase M24B family. It depends on Mn(2+) as a cofactor.

It catalyses the reaction Release of any N-terminal amino acid, including proline, that is linked to proline, even from a dipeptide or tripeptide.. Its function is as follows. Catalyzes the removal of a penultimate prolyl residue from the N-termini of peptides. The sequence is that of Probable Xaa-Pro aminopeptidase P (AMPP) from Blastomyces gilchristii (strain SLH14081) (Blastomyces dermatitidis).